A 180-amino-acid chain; its full sequence is MGDPKRQRKRYETPSHPWIKERLDRERVLVQKYALKNKKELWKHETQLKNFRRRARRLLAARGKQAEIERAQLLQRLARLGILPEGAHLDDVLSLTIDDILERRLQTLVFKKGLARTIKQARQLIVHGHIEVNGQIIRSPSYLVLKEEEDGITYGRASPFANSQHPERMVIEEVQKGEAQ.

The 72-residue stretch at 103–174 (RRLQTLVFKK…HPERMVIEEV (72 aa)) folds into the S4 RNA-binding domain.

This sequence belongs to the universal ribosomal protein uS4 family. Part of the 30S ribosomal subunit. Contacts protein S5. The interaction surface between S4 and S5 is involved in control of translational fidelity.

One of the primary rRNA binding proteins, it binds directly to 16S rRNA where it nucleates assembly of the body of the 30S subunit. In terms of biological role, with S5 and S12 plays an important role in translational accuracy. This chain is Small ribosomal subunit protein uS4, found in Thermococcus sibiricus (strain DSM 12597 / MM 739).